The following is a 259-amino-acid chain: Ribosomal RNA small subunit methyltransferase A (259 aa).

Residues asparagine 13, leucine 15, glycine 40, glutamate 61, aspartate 85, and asparagine 103 each coordinate S-adenosyl-L-methionine.

The protein belongs to the class I-like SAM-binding methyltransferase superfamily. rRNA adenine N(6)-methyltransferase family. RsmA subfamily.

It is found in the cytoplasm. It carries out the reaction adenosine(1518)/adenosine(1519) in 16S rRNA + 4 S-adenosyl-L-methionine = N(6)-dimethyladenosine(1518)/N(6)-dimethyladenosine(1519) in 16S rRNA + 4 S-adenosyl-L-homocysteine + 4 H(+). Its function is as follows. Specifically dimethylates two adjacent adenosines (A1518 and A1519) in the loop of a conserved hairpin near the 3'-end of 16S rRNA in the 30S particle. May play a critical role in biogenesis of 30S subunits. The protein is Ribosomal RNA small subunit methyltransferase A of Neisseria meningitidis serogroup B (strain ATCC BAA-335 / MC58).